The sequence spans 159 residues: 3-hydroxyacyl-[acyl-carrier-protein] dehydratase FabZ (159 aa).

His62 is a catalytic residue.

The protein belongs to the thioester dehydratase family. FabZ subfamily.

The protein localises to the cytoplasm. The enzyme catalyses a (3R)-hydroxyacyl-[ACP] = a (2E)-enoyl-[ACP] + H2O. Functionally, involved in unsaturated fatty acids biosynthesis. Catalyzes the dehydration of short chain beta-hydroxyacyl-ACPs and long chain saturated and unsaturated beta-hydroxyacyl-ACPs. The chain is 3-hydroxyacyl-[acyl-carrier-protein] dehydratase FabZ from Methylobacterium nodulans (strain LMG 21967 / CNCM I-2342 / ORS 2060).